Reading from the N-terminus, the 435-residue chain is Exopolysaccharide production protein ExoQ (435 aa).

A run of 10 helical transmembrane segments spans residues 11–31, 35–55, 65–85, 117–137, 156–176, 178–198, 203–223, 230–250, 325–345, and 361–381; these read PGANEVYGIFALALSLFVFAY, FGQVSILAYYGLWLPLVLVDY, YLWIFAFTIFACITIFWSAAP, GMIAGAAIVLLYSLLFGTYHY, LGFYASLGIYFAFAAVFVLGE, GLWMGAAGGAGLLAAYCLLTS, SVLTTAAVIGLCLGMRAITAL, LLFIAASVFGGVAAVAMIYAG, VVETGLIGLILLTMVLVTAFF, and MVLFGVGALLFVRAFVEIDIL.

It is found in the cell membrane. The protein operates within glycan metabolism; exopolysaccharide biosynthesis. Its function is as follows. Involved in the production of exopolysaccharide. The sequence is that of Exopolysaccharide production protein ExoQ (exoQ) from Rhizobium meliloti (strain 1021) (Ensifer meliloti).